Reading from the N-terminus, the 607-residue chain is Terpenoid synthase 29 (607 aa).

Residues Asp-358, Asp-362, Asn-502, Thr-506, and Glu-510 each coordinate Mg(2+). The short motif at 358-362 (DDTYD) is the DDXXD motif element.

This sequence belongs to the terpene synthase family. Tpsa subfamily. Mg(2+) serves as cofactor. Mn(2+) is required as a cofactor. Predominantly expressed in flowers but also in siliques, roots, leaves and stems.

It localises to the cytoplasm. It participates in secondary metabolite biosynthesis; terpenoid biosynthesis. This Arabidopsis thaliana (Mouse-ear cress) protein is Terpenoid synthase 29 (TPS29).